Consider the following 366-residue polypeptide: MTYKRIDTSEYPQQLAQKADRVREMFRPFHLNEVEVFESPASHYRMRAEFRVWHEGDDLYYIMFNPETREKIRMNEFIPGSLLINELMKELISLLKPNDVLRRKLFQVDFLTTTTGEAIISLLYHRPLDDQWEQEAIQLREALTSIAKVEVIGRARKQKRVLYKESVTEEVKVDGKSYLSLQTENSFTQPNAIINQQMISWAKRHAGNNSHDLLELYCGNGNFTLPLAENFNRVLATEISKSSVAAARENAELNNIKNVTVVRMSAEEFSAALSGELESKRAADAEIHSFDCQTVLVDPPRAGLDKDTLKLVSQYQRIIYISCNPETLTENIHDLSSSHKVTAAAMFDQFPYTDHIETGVVLERKS.

Residues glutamine 189, tyrosine 217, asparagine 222, glutamate 238, and aspartate 298 each contribute to the S-adenosyl-L-methionine site. Catalysis depends on cysteine 323, which acts as the Nucleophile. Catalysis depends on glutamate 357, which acts as the Proton acceptor.

Belongs to the class I-like SAM-binding methyltransferase superfamily. RNA M5U methyltransferase family. TrmA subfamily.

The catalysed reaction is uridine(54) in tRNA + S-adenosyl-L-methionine = 5-methyluridine(54) in tRNA + S-adenosyl-L-homocysteine + H(+). It carries out the reaction uridine(341) in tmRNA + S-adenosyl-L-methionine = 5-methyluridine(341) in tmRNA + S-adenosyl-L-homocysteine + H(+). Functionally, dual-specificity methyltransferase that catalyzes the formation of 5-methyluridine at position 54 (m5U54) in all tRNAs, and that of position 341 (m5U341) in tmRNA (transfer-mRNA). This chain is tRNA/tmRNA (uracil-C(5))-methyltransferase, found in Idiomarina loihiensis (strain ATCC BAA-735 / DSM 15497 / L2-TR).